The primary structure comprises 277 residues: uncharacterized protein (277 aa).

Disordered stretches follow at residues 1 to 103 (PPLR…LEDP) and 254 to 277 (PSPS…SPPR). Positions 48 to 65 (RRNDTGKDRGTHRQRAET) are enriched in basic and acidic residues. Residues 66–77 (PSRSPVPTTNTV) are compositionally biased toward polar residues. The segment covering 82–91 (PAVRRQRRTQ) has biased composition (basic residues).

This is an uncharacterized protein from Homo sapiens (Human).